A 462-amino-acid chain; its full sequence is Exodeoxyribonuclease 7 large subunit (462 aa).

It belongs to the XseA family. Heterooligomer composed of large and small subunits.

It localises to the cytoplasm. It catalyses the reaction Exonucleolytic cleavage in either 5'- to 3'- or 3'- to 5'-direction to yield nucleoside 5'-phosphates.. In terms of biological role, bidirectionally degrades single-stranded DNA into large acid-insoluble oligonucleotides, which are then degraded further into small acid-soluble oligonucleotides. This Pectobacterium carotovorum subsp. carotovorum (strain PC1) protein is Exodeoxyribonuclease 7 large subunit.